Reading from the N-terminus, the 304-residue chain is Protein translocase subunit SecF (304 aa).

6 consecutive transmembrane segments (helical) span residues 20-40 (AKLF…LIFT), 143-163 (AMMA…IRFE), 164-184 (LIFA…TLGF), 195-215 (TVVA…IVVF), 244-266 (LSRT…IFGG), and 276-298 (LVIG…VYLI).

It belongs to the SecD/SecF family. SecF subfamily. Forms a complex with SecD. Part of the essential Sec protein translocation apparatus which comprises SecA, SecYEG and auxiliary proteins SecDF. Other proteins may also be involved.

It is found in the cell inner membrane. Functionally, part of the Sec protein translocase complex. Interacts with the SecYEG preprotein conducting channel. SecDF uses the proton motive force (PMF) to complete protein translocation after the ATP-dependent function of SecA. This Calditerrivibrio nitroreducens (strain DSM 19672 / NBRC 101217 / Yu37-1) protein is Protein translocase subunit SecF.